A 156-amino-acid polypeptide reads, in one-letter code: Probable histone H2A.6 (156 aa).

Disordered regions lie at residues 1–26 and 129–156; these read MDVGVGGKAAKKAVGRKLGGPKKKPV and KKTAEKADKPAKASKDKAAKSPKKQARS. The span at 9–26 shows a compositional bias: basic residues; that stretch reads AAKKAVGRKLGGPKKKPV. The span at 130 to 147 shows a compositional bias: basic and acidic residues; that stretch reads KTAEKADKPAKASKDKAA. The short motif at 149–152 is the SPKK motif element; that stretch reads SPKK.

This sequence belongs to the histone H2A family. In terms of assembly, the nucleosome is a histone octamer containing two molecules each of H2A, H2B, H3 and H4 assembled in one H3-H4 heterotetramer and two H2A-H2B heterodimers. The octamer wraps approximately 147 bp of DNA.

The protein resides in the nucleus. It is found in the chromosome. Functionally, core component of nucleosome. Nucleosomes wrap and compact DNA into chromatin, limiting DNA accessibility to the cellular machineries which require DNA as a template. Histones thereby play a central role in transcription regulation, DNA repair, DNA replication and chromosomal stability. DNA accessibility is regulated via a complex set of post-translational modifications of histones, also called histone code, and nucleosome remodeling. The chain is Probable histone H2A.6 from Oryza sativa subsp. indica (Rice).